We begin with the raw amino-acid sequence, 206 residues long: Large ribosomal subunit protein mL62 (206 aa).

The transit peptide at 1-29 (MATAWCLPWTLRRAGAWLLTPPLRCPRRA) directs the protein to the mitochondrion.

This sequence belongs to the prokaryotic/mitochondrial release factor family. Mitochondrion-specific ribosomal protein mL62 subfamily. As to quaternary structure, component of the mitochondrial 39S ribosomal subunit.

Its subcellular location is the mitochondrion. It carries out the reaction an N-acyl-L-alpha-aminoacyl-tRNA + H2O = an N-acyl-L-amino acid + a tRNA + H(+). In terms of biological role, essential peptidyl-tRNA hydrolase component of the mitochondrial large ribosomal subunit. Acts as a codon-independent translation release factor that has lost all stop codon specificity and directs the termination of translation in mitochondrion, possibly in case of abortive elongation. May be involved in the hydrolysis of peptidyl-tRNAs that have been prematurely terminated and thus in the recycling of stalled mitochondrial ribosomes. The polypeptide is Large ribosomal subunit protein mL62 (Ailuropoda melanoleuca (Giant panda)).